A 500-amino-acid chain; its full sequence is L-arabinose isomerase (500 aa).

Mn(2+) contacts are provided by Glu306, Glu333, His350, and His450.

Belongs to the arabinose isomerase family. Homohexamer. It depends on Mn(2+) as a cofactor.

It carries out the reaction beta-L-arabinopyranose = L-ribulose. Its pathway is carbohydrate degradation; L-arabinose degradation via L-ribulose; D-xylulose 5-phosphate from L-arabinose (bacterial route): step 1/3. Catalyzes the conversion of L-arabinose to L-ribulose. The chain is L-arabinose isomerase from Salmonella arizonae (strain ATCC BAA-731 / CDC346-86 / RSK2980).